We begin with the raw amino-acid sequence, 396 residues long: ATP phosphoribosyltransferase regulatory subunit (396 aa).

The protein belongs to the class-II aminoacyl-tRNA synthetase family. HisZ subfamily. As to quaternary structure, heteromultimer composed of HisG and HisZ subunits.

It is found in the cytoplasm. It participates in amino-acid biosynthesis; L-histidine biosynthesis; L-histidine from 5-phospho-alpha-D-ribose 1-diphosphate: step 1/9. Its function is as follows. Required for the first step of histidine biosynthesis. May allow the feedback regulation of ATP phosphoribosyltransferase activity by histidine. This chain is ATP phosphoribosyltransferase regulatory subunit, found in Cellvibrio japonicus (strain Ueda107) (Pseudomonas fluorescens subsp. cellulosa).